The primary structure comprises 341 residues: UDP-glucose 4-epimerase (341 aa).

It belongs to the polysaccharide synthase family.

It catalyses the reaction UDP-alpha-D-glucose = UDP-alpha-D-galactose. Functionally, epimerizes UDP-galactose to UDP-glucose. The polypeptide is UDP-glucose 4-epimerase (capD) (Rickettsia typhi (strain ATCC VR-144 / Wilmington)).